The sequence spans 132 residues: Heat shock protein 15 homolog (132 aa).

Positions 11–73 (VRLDKWLWAA…DEREVRVLQV (63 aa)) constitute an S4 RNA-binding domain. Basic and acidic residues-rich tracts occupy residues 94 to 105 (LKKRAENSEARR) and 114 to 125 (PERRPDKQERRQ). A disordered region spans residues 94–132 (LKKRAENSEARRFNSQFAPSPERRPDKQERRQLIKVKQY).

It belongs to the HSP15 family.

May play an important role in binding of nucleic acid. More specific for RNA. The chain is Heat shock protein 15 homolog (hslR) from Aeromonas salmonicida.